The primary structure comprises 433 residues: ATP-dependent RNA helicase SUB2 (433 aa).

Acidic residues predominate over residues 1 to 17; sequence MSAENQEELLDYSDSEE. The tract at residues 1-39 is disordered; the sequence is MSAENQEELLDYSDSEEIAVPTTTQAGEGESANDKEADK. Residues 49-77 carry the Q motif motif; the sequence is TGFRDFLLKPELLRAIGDCGFEHPSEVQQ. Residues 80-255 enclose the Helicase ATP-binding domain; the sequence is IPQSILGTDV…KKFMQNPLEI (176 aa). 93–100 lines the ATP pocket; sequence AKSGLGKT. Positions 202 to 205 match the DEAD box motif; the sequence is DECD. The region spanning 267 to 428 is the Helicase C-terminal domain; sequence GLQQYYIKLE…EFPEEGVDPS (162 aa).

The protein belongs to the DEAD box helicase family. DECD subfamily.

It is found in the nucleus. It carries out the reaction ATP + H2O = ADP + phosphate + H(+). In terms of biological role, ATP-binding RNA helicase involved in transcription elongation and required for the export of mRNA out of the nucleus. SUB2 also plays a role in pre-mRNA splicing and spliceosome assembly. May be involved in rDNA and telomeric silencing, and maintenance of genome integrity. In Lodderomyces elongisporus (strain ATCC 11503 / CBS 2605 / JCM 1781 / NBRC 1676 / NRRL YB-4239) (Yeast), this protein is ATP-dependent RNA helicase SUB2 (SUB2).